A 398-amino-acid polypeptide reads, in one-letter code: Neuroplastin (398 aa).

The signal sequence occupies residues 1 to 28; it reads MSGSSLPSALALSLLLVSGSLLPGPGAA. 3 Ig-like domains span residues 29-134, 148-235, and 238-329; these read QNAG…PSIT, PRIV…IEVK, and PDIT…SVVT. Residues 29 to 339 are Extracellular-facing; that stretch reads QNAGFVKSPM…VLRVRSHLAP (311 aa). Residues C52 and C116 are joined by a disulfide bond. The narpin; mediates binding with FGFR1 and has antidepressant-like activity stretch occupies residues 149-161; that stretch reads RIVTSEEVIIRDS. C170 and C218 are disulfide-bonded. N-linked (GlcNAc...) asparagine glycosylation is found at N171, N197, N229, N284, N296, and N317. C259 and C316 form a disulfide bridge. Residues 340-360 traverse the membrane as a helical segment; it reads LWPFLGILAEIIILVVIIVVY. The Cytoplasmic portion of the chain corresponds to 361–398; sequence EKRKRPDEVPDDDEPAGPMKTNSTNNHKDKNLRQRNTN. Positions 365–398 are disordered; that stretch reads RPDEVPDDDEPAGPMKTNSTNNHKDKNLRQRNTN.

Interacts with ATP2B1; this interaction stabilizes ATP2B1 and increases ATPase activity; this interaction controls T cell calcium homeostasis following T cell activation. Interacts with XKR8; promoting its localization at the cell membrane. As to expression, isoform 1 is ubiquitously expressed. Isoform 2 is expressed in brain cortex and cerebellum (at protein level).

The protein resides in the cell membrane. Its subcellular location is the postsynaptic density. Its function is as follows. Probable homophilic and heterophilic cell adhesion molecule involved in long term potentiation at hippocampal excitatory synapses through activation of p38MAPK. May also regulate neurite outgrowth by activating the FGFR1 signaling pathway. May play a role in synaptic plasticity. Also acts as a chaperone for ATP2B1; stabilizes ATP2B1 and increases its ATPase activity. Promotes localization of XKR8 at the cell membrane. The polypeptide is Neuroplastin (NPTN) (Homo sapiens (Human)).